Reading from the N-terminus, the 265-residue chain is Thiazole synthase (265 aa).

The active-site Schiff-base intermediate with DXP is lysine 106. 1-deoxy-D-xylulose 5-phosphate contacts are provided by residues glycine 167, alanine 193–glycine 194, and asparagine 215–serine 216.

This sequence belongs to the ThiG family. As to quaternary structure, homotetramer. Forms heterodimers with either ThiH or ThiS.

It is found in the cytoplasm. The catalysed reaction is [ThiS sulfur-carrier protein]-C-terminal-Gly-aminoethanethioate + 2-iminoacetate + 1-deoxy-D-xylulose 5-phosphate = [ThiS sulfur-carrier protein]-C-terminal Gly-Gly + 2-[(2R,5Z)-2-carboxy-4-methylthiazol-5(2H)-ylidene]ethyl phosphate + 2 H2O + H(+). It functions in the pathway cofactor biosynthesis; thiamine diphosphate biosynthesis. In terms of biological role, catalyzes the rearrangement of 1-deoxy-D-xylulose 5-phosphate (DXP) to produce the thiazole phosphate moiety of thiamine. Sulfur is provided by the thiocarboxylate moiety of the carrier protein ThiS. In vitro, sulfur can be provided by H(2)S. In Prochlorococcus marinus (strain MIT 9515), this protein is Thiazole synthase.